A 438-amino-acid chain; its full sequence is Fumarate hydratase class II (438 aa).

Substrate is bound by residues 76 to 78, 101 to 104, 111 to 113, and Thr-159; these read SGT, HPND, and SSN. Catalysis depends on His-160, which acts as the Proton donor/acceptor. Residue Ser-291 is part of the active site. Substrate is bound by residues Ser-292 and 297–299; that span reads KTN.

The protein belongs to the class-II fumarase/aspartase family. Fumarase subfamily. As to quaternary structure, homotetramer.

It localises to the cytoplasm. It catalyses the reaction (S)-malate = fumarate + H2O. Its pathway is carbohydrate metabolism; tricarboxylic acid cycle; (S)-malate from fumarate: step 1/1. In terms of biological role, involved in the TCA cycle. Catalyzes the stereospecific interconversion of fumarate to L-malate. The sequence is that of Fumarate hydratase class II from Saccharolobus solfataricus (strain ATCC 35092 / DSM 1617 / JCM 11322 / P2) (Sulfolobus solfataricus).